We begin with the raw amino-acid sequence, 940 residues long: Glutamate receptor 2.9 (940 aa).

An N-terminal signal peptide occupies residues 1–23 (MKTNNTFLSYFVCGFLLMGVGLG). Residues 24–566 (QNQTSEIKVG…DTWVFLEPWS (543 aa)) are Extracellular-facing. 6 N-linked (GlcNAc...) asparagine glycosylation sites follow: asparagine 25, asparagine 39, asparagine 115, asparagine 338, asparagine 345, and asparagine 528. Residues 567-587 (LELWVTTGCFFVFIGFVVWLF) traverse the membrane as a helical segment. The Cytoplasmic portion of the chain corresponds to 588–596 (EHRVNTDFR). A helical transmembrane segment spans residues 597-617 (GPPQYQIGTSLWFSFSTMVFA). The Cytoplasmic segment spans residues 618 to 628 (HRENVVSNLAR). The chain crosses the membrane as a helical span at residues 629–649 (FVVVVWCFVVLVLTQSYTASL). Over 650 to 811 (TSFLTVQSLQ…NRLNLSSFLG (162 aa)) the chain is Extracellular. N-linked (GlcNAc...) asparagine glycosylation is found at asparagine 771, asparagine 776, and asparagine 805. The helical transmembrane segment at 812–832 (LFLIAGTAISFSLLVFVALFL) threads the bilayer. Topologically, residues 833-940 (YEHRHTLGDD…ESDIECRVEQ (108 aa)) are cytoplasmic. Disordered regions lie at residues 876–900 (ISSP…QSPS) and 914–940 (PSEE…RVEQ).

It belongs to the glutamate-gated ion channel (TC 1.A.10.1) family. As to quaternary structure, may form heteromers. Expressed predominantly in roots.

It localises to the membrane. In terms of biological role, glutamate-gated receptor that probably acts as a non-selective cation channel. May be involved in light-signal transduction and calcium homeostasis via the regulation of calcium influx into cells. The protein is Glutamate receptor 2.9 (GLR2.9) of Arabidopsis thaliana (Mouse-ear cress).